A 567-amino-acid chain; its full sequence is MTMIGWLQIILFCVIIVALTKPLGWYMTRVFNGERTFLSPVLRPIEAGIYWISGVDERREQHWLTYTVAMLLFHVGGFLVIYGVMRLQAVLPFNPAGQSAVAQDLSFNTAISFITNTNWQNYGGESTLSYLVQMLGLTHQNFLSAATGIALAMALIRGFSRASVRTVGNFWVDVTRCTLYVLLPICVVYTLFLVWQGIPQTLGDYVEATTLEGAKQTIAVGPVASQVAIKMLGTNGGGFFNANAAHPFENPTALSNFVQMLSIFALGAALTNVFGRMVGNQRQGWAILAVMGVLFVAGVAVTYWAEANGTSTMHALGLTGGNMEGKEVRFGLVASSLFAVITTAASCGAVNAMHDSFTALGGMIPLINMQLGEIIVGGVGAGLYGMLLFVVLAIFVAGLMVGRTPEYVGKKIEAREVKMAMLAILVLPLMYLGWTAVGVVYPAAVASMANAGPHGFTEVLYAFTSATGNNGSAFAGLTGNTLFYNLTLASAMFVGRFFMIVPAMAIAGSLAAKKSIPPSAGTFPTTGGLFVGLVVGVILIIGGLTFFPALALGPIVEHLAMNAGQVF.

12 helical membrane passes run 3–23, 64–84, 136–156, 179–199, 220–240, 254–274, 285–305, 330–350, 374–394, 420–440, 488–508, and 527–547; these read MIGW…TKPL, LTYT…IYGV, GLTH…MALI, LYVL…QGIP, VGPV…GGFF, LSNF…TNVF, WAIL…TYWA, FGLV…CGAV, IIVG…VLAI, AMLA…VGVV, LASA…AIAG, and GGLF…LTFF.

This sequence belongs to the KdpA family. In terms of assembly, the system is composed of three essential subunits: KdpA, KdpB and KdpC.

The protein localises to the cell inner membrane. Its function is as follows. Part of the high-affinity ATP-driven potassium transport (or Kdp) system, which catalyzes the hydrolysis of ATP coupled with the electrogenic transport of potassium into the cytoplasm. This subunit binds the periplasmic potassium ions and delivers the ions to the membrane domain of KdpB through an intramembrane tunnel. In Bradyrhizobium diazoefficiens (strain JCM 10833 / BCRC 13528 / IAM 13628 / NBRC 14792 / USDA 110), this protein is Potassium-transporting ATPase potassium-binding subunit.